A 407-amino-acid polypeptide reads, in one-letter code: Carbamoyl phosphate synthase small chain (407 aa).

Residues 1–205 (MTETTPKTAP…LQDGYGEQDA (205 aa)) are CPSase. The L-glutamine site is built by Ser60, Gly257, and Gly259. A Glutamine amidotransferase type-1 domain is found at 209-397 (HVVALDFGVK…INLIRERKGQ (189 aa)). Catalysis depends on Cys286, which acts as the Nucleophile. L-glutamine is bound by residues Leu287, Gln290, Asn328, Gly330, and Phe331. Catalysis depends on residues His370 and Glu372.

This sequence belongs to the CarA family. Composed of two chains; the small (or glutamine) chain promotes the hydrolysis of glutamine to ammonia, which is used by the large (or ammonia) chain to synthesize carbamoyl phosphate. Tetramer of heterodimers (alpha,beta)4.

It catalyses the reaction hydrogencarbonate + L-glutamine + 2 ATP + H2O = carbamoyl phosphate + L-glutamate + 2 ADP + phosphate + 2 H(+). The enzyme catalyses L-glutamine + H2O = L-glutamate + NH4(+). It functions in the pathway amino-acid biosynthesis; L-arginine biosynthesis; carbamoyl phosphate from bicarbonate: step 1/1. It participates in pyrimidine metabolism; UMP biosynthesis via de novo pathway; (S)-dihydroorotate from bicarbonate: step 1/3. Small subunit of the glutamine-dependent carbamoyl phosphate synthetase (CPSase). CPSase catalyzes the formation of carbamoyl phosphate from the ammonia moiety of glutamine, carbonate, and phosphate donated by ATP, constituting the first step of 2 biosynthetic pathways, one leading to arginine and/or urea and the other to pyrimidine nucleotides. The small subunit (glutamine amidotransferase) binds and cleaves glutamine to supply the large subunit with the substrate ammonia. The polypeptide is Carbamoyl phosphate synthase small chain (Brucella abortus (strain S19)).